Here is a 110-residue protein sequence, read N- to C-terminus: Acylphosphatase (110 aa).

The region spanning T21 to G108 is the Acylphosphatase-like domain. Residues R36 and N54 contribute to the active site.

Belongs to the acylphosphatase family.

It carries out the reaction an acyl phosphate + H2O = a carboxylate + phosphate + H(+). This chain is Acylphosphatase (acyP), found in Koribacter versatilis (strain Ellin345).